The sequence spans 1004 residues: 26S proteasome non-ATPase regulatory subunit 1 homolog A (1004 aa).

At alanine 2 the chain carries N-acetylalanine. Residue lysine 166 forms a Glycyl lysine isopeptide (Lys-Gly) (interchain with G-Cter in ubiquitin) linkage. 10 PC repeats span residues 412–447, 452–485, 487–521, 522–555, 557–590, 591–626, 627–659, 661–695, 696–736, and 739–771; these read SATA…GGSP, GALY…EVIQ, GACL…VAGE, AAGI…EKII, GLAL…IIRY, GGMY…DVRR, TAVL…PHVR, GAAL…FVRQ, GALI…DTMS, and GAIL…TAVI. Disordered regions lie at residues 858 to 905 and 959 to 1004; these read EQKA…KKAP and VLSL…EYAS. Serine 896 carries the phosphoserine modification. Residues 965 to 987 are compositionally biased toward low complexity; it reads APTSTASPATGTAAAAQGTPASA.

It belongs to the proteasome subunit S1 family. Component of the 19S regulatory particle (RP/PA700) base subcomplex of the 26S proteasome. The 26S proteasome is composed of a core protease (CP), known as the 20S proteasome, capped at one or both ends by the 19S regulatory particle (RP/PA700). The RP/PA700 complex is composed of at least 17 different subunits in two subcomplexes, the base and the lid, which form the portions proximal and distal to the 20S proteolytic core, respectively. In terms of tissue distribution, ubiquitous with highest expression in flowers.

In terms of biological role, acts as a regulatory subunit of the 26 proteasome which is involved in the ATP-dependent degradation of ubiquitinated proteins. This Arabidopsis thaliana (Mouse-ear cress) protein is 26S proteasome non-ATPase regulatory subunit 1 homolog A (RPN2A).